A 473-amino-acid polypeptide reads, in one-letter code: Trigger factor (473 aa).

The PPIase FKBP-type domain occupies 171-256 (GDRVTIDFVG…VTKIQAAGEA (86 aa)). Residues 439-473 (KEALFADEDGDDTTGGKPADKAEAKDESKTEAKAD) are disordered. Over residues 456-473 (PADKAEAKDESKTEAKAD) the composition is skewed to basic and acidic residues.

The protein belongs to the FKBP-type PPIase family. Tig subfamily.

It localises to the cytoplasm. The catalysed reaction is [protein]-peptidylproline (omega=180) = [protein]-peptidylproline (omega=0). Involved in protein export. Acts as a chaperone by maintaining the newly synthesized protein in an open conformation. Functions as a peptidyl-prolyl cis-trans isomerase. The polypeptide is Trigger factor (Methylobacterium radiotolerans (strain ATCC 27329 / DSM 1819 / JCM 2831 / NBRC 15690 / NCIMB 10815 / 0-1)).